A 361-amino-acid polypeptide reads, in one-letter code: GDSL esterase/lipase At2g40250 (361 aa).

The signal sequence occupies residues 1–28 (MNRNQHKPMFVTFLINILLLQLLNLTNA). The Nucleophile role is filled by S43. Active-site residues include D337 and H340.

The protein belongs to the 'GDSL' lipolytic enzyme family.

Its subcellular location is the secreted. This chain is GDSL esterase/lipase At2g40250, found in Arabidopsis thaliana (Mouse-ear cress).